The primary structure comprises 157 residues: Serine-protein kinase RsbW (157 aa).

It belongs to the anti-sigma-factor family.

It carries out the reaction L-seryl-[protein] + ATP = O-phospho-L-seryl-[protein] + ADP + H(+). The enzyme catalyses L-threonyl-[protein] + ATP = O-phospho-L-threonyl-[protein] + ADP + H(+). Negative regulator of sigma-B activity. Phosphorylates and inactivates its specific antagonist protein, RsbV. Upon phosphorylation of RsbV, RsbW is released and binds to sigma-B, thereby blocking its ability to form an RNA polymerase holoenzyme (E-sigma-B). The polypeptide is Serine-protein kinase RsbW (Listeria monocytogenes serotype 4b (strain CLIP80459)).